A 214-amino-acid polypeptide reads, in one-letter code: A-type ATP synthase subunit D (214 aa).

The protein belongs to the V-ATPase D subunit family. In terms of assembly, has multiple subunits with at least A(3), B(3), C, D, E, F, H, I and proteolipid K(x).

The protein resides in the cell membrane. Its function is as follows. Component of the A-type ATP synthase that produces ATP from ADP in the presence of a proton gradient across the membrane. The polypeptide is A-type ATP synthase subunit D (Thermococcus gammatolerans (strain DSM 15229 / JCM 11827 / EJ3)).